The chain runs to 499 residues: Aspartyl/glutamyl-tRNA(Asn/Gln) amidotransferase subunit B (499 aa).

Belongs to the GatB/GatE family. GatB subfamily. As to quaternary structure, heterotrimer of A, B and C subunits.

The catalysed reaction is L-glutamyl-tRNA(Gln) + L-glutamine + ATP + H2O = L-glutaminyl-tRNA(Gln) + L-glutamate + ADP + phosphate + H(+). It catalyses the reaction L-aspartyl-tRNA(Asn) + L-glutamine + ATP + H2O = L-asparaginyl-tRNA(Asn) + L-glutamate + ADP + phosphate + 2 H(+). Allows the formation of correctly charged Asn-tRNA(Asn) or Gln-tRNA(Gln) through the transamidation of misacylated Asp-tRNA(Asn) or Glu-tRNA(Gln) in organisms which lack either or both of asparaginyl-tRNA or glutaminyl-tRNA synthetases. The reaction takes place in the presence of glutamine and ATP through an activated phospho-Asp-tRNA(Asn) or phospho-Glu-tRNA(Gln). The protein is Aspartyl/glutamyl-tRNA(Asn/Gln) amidotransferase subunit B of Bartonella quintana (strain Toulouse) (Rochalimaea quintana).